The chain runs to 54 residues: uncharacterized protein (54 aa).

Residues 1–54 (MSKKSTPMTKDAASRIQSSAAKSGGDVSSGSFASRAQSAAAINANNTSNSTGKK) are disordered. Over residues 28–54 (SSGSFASRAQSAAAINANNTSNSTGKK) the composition is skewed to low complexity.

This is an uncharacterized protein from Dictyostelium discoideum (Social amoeba).